Here is a 485-residue protein sequence, read N- to C-terminus: Cysteine--tRNA ligase (485 aa).

Cys29 provides a ligand contact to Zn(2+). The 'HIGH' region signature appears at 31-41; it reads ATVQGMPHVGH. A disordered region spans residues 174 to 198; sequence QRVEDMQDAPDADPRGKRDPHDFAL. Positions 185–197 are enriched in basic and acidic residues; sequence ADPRGKRDPHDFA. Residues Cys227, His252, and Glu256 each coordinate Zn(2+). The short motif at 283–287 is the 'KMSKS' region element; that stretch reads KMSKS. Lys286 is an ATP binding site.

Belongs to the class-I aminoacyl-tRNA synthetase family. In terms of assembly, monomer. Requires Zn(2+) as cofactor.

The protein localises to the cytoplasm. It catalyses the reaction tRNA(Cys) + L-cysteine + ATP = L-cysteinyl-tRNA(Cys) + AMP + diphosphate. The sequence is that of Cysteine--tRNA ligase from Micrococcus luteus (strain ATCC 4698 / DSM 20030 / JCM 1464 / CCM 169 / CCUG 5858 / IAM 1056 / NBRC 3333 / NCIMB 9278 / NCTC 2665 / VKM Ac-2230) (Micrococcus lysodeikticus).